Here is a 215-residue protein sequence, read N- to C-terminus: Leucyl/phenylalanyl-tRNA--protein transferase (215 aa).

This sequence belongs to the L/F-transferase family.

It localises to the cytoplasm. The catalysed reaction is N-terminal L-lysyl-[protein] + L-leucyl-tRNA(Leu) = N-terminal L-leucyl-L-lysyl-[protein] + tRNA(Leu) + H(+). The enzyme catalyses N-terminal L-arginyl-[protein] + L-leucyl-tRNA(Leu) = N-terminal L-leucyl-L-arginyl-[protein] + tRNA(Leu) + H(+). It carries out the reaction L-phenylalanyl-tRNA(Phe) + an N-terminal L-alpha-aminoacyl-[protein] = an N-terminal L-phenylalanyl-L-alpha-aminoacyl-[protein] + tRNA(Phe). In terms of biological role, functions in the N-end rule pathway of protein degradation where it conjugates Leu, Phe and, less efficiently, Met from aminoacyl-tRNAs to the N-termini of proteins containing an N-terminal arginine or lysine. The polypeptide is Leucyl/phenylalanyl-tRNA--protein transferase (Campylobacter jejuni subsp. jejuni serotype O:6 (strain 81116 / NCTC 11828)).